The chain runs to 218 residues: Glutathione S-transferase class-mu 26 kDa isozyme (218 aa).

A GST N-terminal domain is found at 1 to 83 (MAPKFGYWKV…YIADKHNMLG (83 aa)). Residues 7–8 (YW), 41–45 (WSNDK), 54–55 (NL), and 67–68 (QS) contribute to the glutathione site. The GST C-terminal domain maps to 85-203 (CPKERAEISM…NSSRYIKWPL (119 aa)). Tyrosine 111 contributes to the substrate binding site.

Belongs to the GST superfamily. Mu family. Homodimer. In terms of tissue distribution, tegument and in subtegumentary parenchymal cells. GST 26 may be actively excreted by adult worms.

It carries out the reaction RX + glutathione = an S-substituted glutathione + a halide anion + H(+). Its function is as follows. Conjugation of reduced glutathione to a wide number of exogenous and endogenous hydrophobic electrophiles. Functionally, GST isoenzymes appear to play a central role in the parasite detoxification system. Other functions are also suspected including a role in increasing the solubility of haematin in the parasite gut. The polypeptide is Glutathione S-transferase class-mu 26 kDa isozyme (Schistosoma mansoni (Blood fluke)).